Here is a 458-residue protein sequence, read N- to C-terminus: Adenylosuccinate synthetase (458 aa).

Residues 11-17 (GDEGKGG) and 39-41 (GHT) contribute to the GTP site. Asp12 (proton acceptor) is an active-site residue. The Mg(2+) site is built by Asp12 and Gly39. IMP is bound by residues 12–15 (DEGK), 37–40 (NAGH), Thr127, Arg141, Gln232, Thr247, and Arg330. Residue His40 is the Proton donor of the active site. 326–332 (TVTGRPR) lines the substrate pocket. Residues Arg332, 358 to 360 (HLD), and 443 to 445 (GVG) each bind GTP.

It belongs to the adenylosuccinate synthetase family. As to quaternary structure, homodimer. The cofactor is Mg(2+).

The protein localises to the cytoplasm. The enzyme catalyses IMP + L-aspartate + GTP = N(6)-(1,2-dicarboxyethyl)-AMP + GDP + phosphate + 2 H(+). Its pathway is purine metabolism; AMP biosynthesis via de novo pathway; AMP from IMP: step 1/2. Its function is as follows. Plays an important role in the de novo pathway of purine nucleotide biosynthesis. Catalyzes the first committed step in the biosynthesis of AMP from IMP. This chain is Adenylosuccinate synthetase, found in Haloarcula marismortui (strain ATCC 43049 / DSM 3752 / JCM 8966 / VKM B-1809) (Halobacterium marismortui).